The sequence spans 535 residues: Expansin-like protein 9 (535 aa).

An N-terminal signal peptide occupies residues 1–25 (MKINKNNYFKIIIFIIYVIINLINA). An N-linked (GlcNAc...) asparagine glycan is attached at N24. Over 26-514 (SDNVKLSNCG…DNSSNILLFS (489 aa)) the chain is Extracellular. Residues 31–144 (LSNCGQARAE…QEVSCGFLGN (114 aa)) enclose the Expansin-like EG45 domain. 2 disulfides stabilise this stretch: C34–C75 and C78–C139. Residues N122, N257, and N292 are each glycosylated (N-linked (GlcNAc...) asparagine). The interval 459–487 (VDGSSNDDDGTGGTGGGASNKVGKRVDGE) is disordered. N-linked (GlcNAc...) asparagine glycosylation occurs at N506. A helical membrane pass occupies residues 515-535 (FNITLTFLLLSLIINILLLLF).

It belongs to the expansin family. Expansin A subfamily.

The protein resides in the membrane. Its function is as follows. May serve to lubricate the movement of the cellulose microfibrils during cell growth and wall extension and/or may serve to maintain the fluid state of the slug cell wall. The sequence is that of Expansin-like protein 9 (expl9) from Dictyostelium discoideum (Social amoeba).